The following is a 167-amino-acid chain: S-ribosylhomocysteine lyase (167 aa).

Residues His54, His58, and Cys128 each coordinate Fe cation.

This sequence belongs to the LuxS family. Homodimer. Fe cation is required as a cofactor.

The enzyme catalyses S-(5-deoxy-D-ribos-5-yl)-L-homocysteine = (S)-4,5-dihydroxypentane-2,3-dione + L-homocysteine. Its function is as follows. Involved in the synthesis of autoinducer 2 (AI-2) which is secreted by bacteria and is used to communicate both the cell density and the metabolic potential of the environment. The regulation of gene expression in response to changes in cell density is called quorum sensing. Catalyzes the transformation of S-ribosylhomocysteine (RHC) to homocysteine (HC) and 4,5-dihydroxy-2,3-pentadione (DPD). The chain is S-ribosylhomocysteine lyase from Haemophilus influenzae (strain 86-028NP).